Consider the following 410-residue polypeptide: Probable 2,3-bisphosphoglycerate-independent phosphoglycerate mutase (410 aa).

It belongs to the BPG-independent phosphoglycerate mutase family. A-PGAM subfamily.

It carries out the reaction (2R)-2-phosphoglycerate = (2R)-3-phosphoglycerate. It functions in the pathway carbohydrate degradation; glycolysis; pyruvate from D-glyceraldehyde 3-phosphate: step 3/5. In terms of biological role, catalyzes the interconversion of 2-phosphoglycerate and 3-phosphoglycerate. This Deinococcus radiodurans (strain ATCC 13939 / DSM 20539 / JCM 16871 / CCUG 27074 / LMG 4051 / NBRC 15346 / NCIMB 9279 / VKM B-1422 / R1) protein is Probable 2,3-bisphosphoglycerate-independent phosphoglycerate mutase.